The sequence spans 103 residues: Large ribosomal subunit protein bL21 (103 aa).

This sequence belongs to the bacterial ribosomal protein bL21 family. As to quaternary structure, part of the 50S ribosomal subunit. Contacts protein L20.

This protein binds to 23S rRNA in the presence of protein L20. The polypeptide is Large ribosomal subunit protein bL21 (Shewanella loihica (strain ATCC BAA-1088 / PV-4)).